The chain runs to 174 residues: Neuromedin-U (174 aa).

Positions 1-37 are cleaved as a signal peptide; the sequence is MSRAAGHRPGLSAGQLAAATASPLLSLLLLLACCADA. Positions 38–105 are excised as a propeptide; that stretch reads CKGVPISPQR…EQSEKDNTKR (68 aa). Residue Met141 is modified to Methionine sulfoxide; partial. An Asparagine amide modification is found at Asn166. Positions 170-174 are excised as a propeptide; that stretch reads STSFI.

The protein belongs to the NmU family.

It is found in the secreted. In terms of biological role, ligand for receptors NMUR1 and NMUR2. Stimulates muscle contractions of specific regions of the gastrointestinal tract. Its function is as follows. Does not function as a ligand for either NMUR1 or NMUR2. Indirectly induces prolactin release although its potency is much lower than that of neuromedin precursor-related peptide 36. Does not function as a ligand for either NMUR1 or NMUR2. Indirectly induces prolactin release from lactotroph cells in the pituitary gland, probably via the hypothalamic dopaminergic system. Functionally, stimulates muscle contractions of specific regions of the gastrointestinal tract. The protein is Neuromedin-U (Nmu) of Mus musculus (Mouse).